Consider the following 465-residue polypeptide: Glutamate--tRNA ligase 1 (465 aa).

The 'HIGH' region motif lies at 8 to 18 (PSPTGNLHIGG). The 'KMSKS' region motif lies at 236–240 (KLSKR). Lysine 239 provides a ligand contact to ATP.

Belongs to the class-I aminoacyl-tRNA synthetase family. Glutamate--tRNA ligase type 1 subfamily. Monomer.

It is found in the cytoplasm. It carries out the reaction tRNA(Glu) + L-glutamate + ATP = L-glutamyl-tRNA(Glu) + AMP + diphosphate. In terms of biological role, catalyzes the attachment of glutamate to tRNA(Glu) in a two-step reaction: glutamate is first activated by ATP to form Glu-AMP and then transferred to the acceptor end of tRNA(Glu). The polypeptide is Glutamate--tRNA ligase 1 (Wolinella succinogenes (strain ATCC 29543 / DSM 1740 / CCUG 13145 / JCM 31913 / LMG 7466 / NCTC 11488 / FDC 602W) (Vibrio succinogenes)).